The chain runs to 221 residues: GTP cyclohydrolase-2 (221 aa).

63–67 contributes to the GTP binding site; it reads RLHSE. Zn(2+) contacts are provided by Cys68, Cys79, and Cys81. GTP is bound by residues Gln84, 107 to 109, and Thr129; that span reads EGR. Catalysis depends on Asp141, which acts as the Proton acceptor. The Nucleophile role is filled by Arg143. Ser164 and Lys169 together coordinate GTP.

Belongs to the GTP cyclohydrolase II family. It depends on Zn(2+) as a cofactor.

It carries out the reaction GTP + 4 H2O = 2,5-diamino-6-hydroxy-4-(5-phosphoribosylamino)-pyrimidine + formate + 2 phosphate + 3 H(+). The protein operates within cofactor biosynthesis; riboflavin biosynthesis; 5-amino-6-(D-ribitylamino)uracil from GTP: step 1/4. Catalyzes the conversion of GTP to 2,5-diamino-6-ribosylamino-4(3H)-pyrimidinone 5'-phosphate (DARP), formate and pyrophosphate. The polypeptide is GTP cyclohydrolase-2 (Streptomyces coelicolor (strain ATCC BAA-471 / A3(2) / M145)).